Here is a 304-residue protein sequence, read N- to C-terminus: GTP cyclohydrolase FolE2 (304 aa).

This sequence belongs to the GTP cyclohydrolase IV family.

It catalyses the reaction GTP + H2O = 7,8-dihydroneopterin 3'-triphosphate + formate + H(+). The protein operates within cofactor biosynthesis; 7,8-dihydroneopterin triphosphate biosynthesis; 7,8-dihydroneopterin triphosphate from GTP: step 1/1. Its function is as follows. Converts GTP to 7,8-dihydroneopterin triphosphate. This Bdellovibrio bacteriovorus (strain ATCC 15356 / DSM 50701 / NCIMB 9529 / HD100) protein is GTP cyclohydrolase FolE2.